A 451-amino-acid polypeptide reads, in one-letter code: DNA polymerase delta subunit 3 (451 aa).

Disordered regions lie at residues 187-241 (SQAK…AASS), 259-386 (KQTP…KVLR), and 404-451 (AWES…FAKK). Polar residues predominate over residues 200–216 (PSTSQVKEAPKASQTVE). A compositionally biased stretch (low complexity) spans 225–241 (SAPAKKGSSAPKSAASS). Residues 306-316 (QREEELRRMME) are compositionally biased toward basic and acidic residues. Residues 329 to 353 (EEEEEEEEEEESEHEQLPAEEEPMA) show a composition bias toward acidic residues. A compositionally biased stretch (basic and acidic residues) spans 354–366 (EEPKAPEPVKEEP). Basic residues predominate over residues 376-386 (GRRRGKRKVLR). The PIP-box motif lies at 441–448 (QGSIMSWF).

As to quaternary structure, component of the DNA polymerase delta complex which consists of PolD1, PolD2, PolD3 and PolD4, with PolD1 bearing DNA polymerase and 3' to 5' proofreading exonuclease activities. Directly interacts with PCNA.

Its subcellular location is the nucleus. Functionally, accessory component of the DNA polymerase delta complex. The complex is required for the maintenance of genome integrity, acting in concert with the sliding clamp processivity factor PCNA. In Chaetomium thermophilum (strain DSM 1495 / CBS 144.50 / IMI 039719) (Thermochaetoides thermophila), this protein is DNA polymerase delta subunit 3.